The sequence spans 273 residues: Pantothenate synthetase (273 aa).

27–34 (MGALHQGH) contributes to the ATP binding site. H34 (proton donor) is an active-site residue. Position 58 (Q58) interacts with (R)-pantoate. Q58 is a binding site for beta-alanine. Position 144 to 147 (144 to 147 (GKKD)) interacts with ATP. Residue Q150 participates in (R)-pantoate binding. ATP-binding positions include V173 and 181–184 (LSSR).

It belongs to the pantothenate synthetase family. As to quaternary structure, homodimer.

It is found in the cytoplasm. It catalyses the reaction (R)-pantoate + beta-alanine + ATP = (R)-pantothenate + AMP + diphosphate + H(+). The protein operates within cofactor biosynthesis; (R)-pantothenate biosynthesis; (R)-pantothenate from (R)-pantoate and beta-alanine: step 1/1. Functionally, catalyzes the condensation of pantoate with beta-alanine in an ATP-dependent reaction via a pantoyl-adenylate intermediate. In Nitratiruptor sp. (strain SB155-2), this protein is Pantothenate synthetase.